The sequence spans 78 residues: MSNKGQLLQDPFLNALRREHVPVSIYLVNGIKLQGQVESFDQYVVLLKNTVTQMVYKHAISTVVPARPVNLQQEQAAE.

The Sm domain occupies 10–69; that stretch reads DPFLNALRREHVPVSIYLVNGIKLQGQVESFDQYVVLLKNTVTQMVYKHAISTVVPARPV.

It belongs to the Hfq family. In terms of assembly, homohexamer.

Its function is as follows. RNA chaperone that binds small regulatory RNA (sRNAs) and mRNAs to facilitate mRNA translational regulation in response to envelope stress, environmental stress and changes in metabolite concentrations. Also binds with high specificity to tRNAs. This Dechloromonas aromatica (strain RCB) protein is RNA-binding protein Hfq.